We begin with the raw amino-acid sequence, 87 residues long: Small ribosomal subunit protein bS16 (87 aa).

The protein belongs to the bacterial ribosomal protein bS16 family.

This chain is Small ribosomal subunit protein bS16, found in Psychrobacter sp. (strain PRwf-1).